The chain runs to 73 residues: Small ribosomal subunit protein bS18 (73 aa).

This sequence belongs to the bacterial ribosomal protein bS18 family. As to quaternary structure, part of the 30S ribosomal subunit. Forms a tight heterodimer with protein bS6.

In terms of biological role, binds as a heterodimer with protein bS6 to the central domain of the 16S rRNA, where it helps stabilize the platform of the 30S subunit. The chain is Small ribosomal subunit protein bS18 from Coxiella burnetii (strain Dugway 5J108-111).